The following is an 872-amino-acid chain: Alanine--tRNA ligase (872 aa).

The Zn(2+) site is built by His567, His571, Cys669, and His673.

This sequence belongs to the class-II aminoacyl-tRNA synthetase family. Zn(2+) is required as a cofactor.

It is found in the cytoplasm. The catalysed reaction is tRNA(Ala) + L-alanine + ATP = L-alanyl-tRNA(Ala) + AMP + diphosphate. Functionally, catalyzes the attachment of alanine to tRNA(Ala) in a two-step reaction: alanine is first activated by ATP to form Ala-AMP and then transferred to the acceptor end of tRNA(Ala). Also edits incorrectly charged Ser-tRNA(Ala) and Gly-tRNA(Ala) via its editing domain. This chain is Alanine--tRNA ligase, found in Streptococcus agalactiae serotype Ia (strain ATCC 27591 / A909 / CDC SS700).